The chain runs to 541 residues: Atlastin (541 aa).

Residues 1-424 (MGGSAVQVIN…NIFKAARTPA (424 aa)) lie on the Cytoplasmic side of the membrane. In terms of domain architecture, GB1/RHD3-type G spans 35 to 284 (DRFVCVVSVA…LVPMLLAPDN (250 aa)). 5 residues coordinate GDP: Arg-48, Lys-49, Gly-50, Lys-51, and Ser-52. Positions 48, 49, 50, 51, 52, and 53 each coordinate GTP. A Mg(2+)-binding site is contributed by Ser-52. Asp-121 lines the Mg(2+) pocket. The GDP site is built by Arg-192, Asp-193, and Val-251. 3 residues coordinate GTP: Arg-192, Asp-193, and Val-251. Residues 322-413 (MLVATAEANH…FTNYQAHNES (92 aa)) form a 3HB (three-helix bundle) domain region. Positions 414 to 422 (KNIFKAART) are linker. A helical membrane pass occupies residues 425–445 (VYFACAVIMYILSGIFGLVGL). At 446-448 (YTF) the chain is on the lumenal side. A helical transmembrane segment spans residues 449–469 (ANFCNLVMGVALLTLALWAYI). Over 470 to 541 (RYSGELSDFG…NASNGKVKRS (72 aa)) the chain is Cytoplasmic. A Phosphothreonine modification is found at Thr-514.

It belongs to the TRAFAC class dynamin-like GTPase superfamily. GB1/RHD3 GTPase family. GB1 subfamily. In terms of assembly, monomeric and homodimeric. The homodimer, transiently formed by two molecules on opposing membranes, is the active form mediating ER membrane fusion. Interacts with spas; interaction may regulate microtubule dynamics. Ubiquitously expressed.

Its subcellular location is the endoplasmic reticulum membrane. It localises to the golgi apparatus membrane. The catalysed reaction is GTP + H2O = GDP + phosphate + H(+). Membrane-anchored GTPase that mediates the GTP-dependent fusion of endoplasmic reticulum (ER) membranes, maintaining the continuous ER network. It facilitates the formation of three-way junctions where ER tubules intersect. Two atlastin-1 on neighboring ER tubules bind GTP and form loose homodimers through the GB1/RHD3-type G domains and 3HB regions. Upon GTP hydrolysis, the 3HB regions tighten, pulling the membranes together to drive their fusion. After fusion, the homodimer disassembles upon release of inorganic phosphate (Pi). Subsequently, GDP dissociates, resetting the monomers to a conformation ready for a new fusion cycle. May also regulate more or less directly Golgi biogenesis. May also regulate microtubule polymerization and Golgi biogenesis. Required for dopaminergic neurons survival and the growth of muscles and synapses at neuromuscular junctions. The protein is Atlastin (atl) of Drosophila melanogaster (Fruit fly).